A 209-amino-acid chain; its full sequence is Small ribosomal subunit protein uS4 (209 aa).

Basic residues predominate over residues 1–13 (MSTKSRTRSKTRL). Disordered stretches follow at residues 1 to 20 (MSTKSRTRSKTRLSRALGIP) and 28 to 49 (YLEKRPYAPGEHGRSKRKQDSD). Positions 95–176 (QRLDALVVRS…PKLPSYLEVE (82 aa)) constitute an S4 RNA-binding domain.

This sequence belongs to the universal ribosomal protein uS4 family. As to quaternary structure, part of the 30S ribosomal subunit. Contacts protein S5. The interaction surface between S4 and S5 is involved in control of translational fidelity.

Its function is as follows. One of the primary rRNA binding proteins, it binds directly to 16S rRNA where it nucleates assembly of the body of the 30S subunit. Functionally, with S5 and S12 plays an important role in translational accuracy. The sequence is that of Small ribosomal subunit protein uS4 from Clavibacter michiganensis subsp. michiganensis (strain NCPPB 382).